The following is a 786-amino-acid chain: Zinc finger transcription factor YRM1 (786 aa).

Residues 1–25 (MSKRGSLQDRASPSEETVKKAQKRR) are disordered. Residues 31–59 (CAFCRKRKLRCDQQKPMCSTCKTRGRSGC) constitute a DNA-binding region (zn(2)-C6 fungal-type). The disordered stretch occupies residues 721–747 (PLAGNSPGLPPEEVRNNSENASHNNET). Positions 737-747 (NSENASHNNET) are enriched in polar residues.

The protein localises to the cytoplasm. It localises to the nucleus. Functionally, transcription factor involved in the regulation of multidrug resistance genes. Acts in concert with YRR1. The protein is Zinc finger transcription factor YRM1 (YRM1) of Saccharomyces cerevisiae (strain ATCC 204508 / S288c) (Baker's yeast).